Here is a 309-residue protein sequence, read N- to C-terminus: Polyprenal reductase (309 aa).

Helical transmembrane passes span 12–32 (LPLY…FTLI), 72–92 (FYAI…SLIY), 114–134 (IPPI…LHVA), 151–171 (MNLF…ISIM), 184–204 (LHVS…LFWI), 242–262 (LVSC…FLVI), and 270–290 (FIIM…HSWY).

This sequence belongs to the steroid 5-alpha reductase family. Polyprenal reductase subfamily.

The protein resides in the endoplasmic reticulum membrane. The enzyme catalyses a di-trans,poly-cis-dolichal + NADP(+) = a di-trans,poly-cis-polyprenal + NADPH + H(+). The protein operates within protein modification; protein glycosylation. Functionally, plays a key role in early steps of protein N-linked glycosylation by being involved in the conversion of polyprenol into dolichol. Acts as a polyprenal reductase that mediates the reduction of polyprenal into dolichal in a NADP-dependent mechanism. Dolichols are required for the synthesis of dolichol-linked monosaccharides and the oligosaccharide precursor used for N-glycosylation. The sequence is that of Polyprenal reductase from Caenorhabditis elegans.